The following is a 91-amino-acid chain: Sec-independent protein translocase protein TatA (91 aa).

Residues methionine 1–glycine 21 form a helical membrane-spanning segment.

It belongs to the TatA/E family. As to quaternary structure, the Tat system comprises two distinct complexes: a TatABC complex, containing multiple copies of TatA, TatB and TatC subunits, and a separate TatA complex, containing only TatA subunits. Substrates initially bind to the TatABC complex, which probably triggers association of the separate TatA complex to form the active translocon.

The protein resides in the cell membrane. Its function is as follows. Part of the twin-arginine translocation (Tat) system that transports large folded proteins containing a characteristic twin-arginine motif in their signal peptide across membranes. TatA could form the protein-conducting channel of the Tat system. This is Sec-independent protein translocase protein TatA from Rhodococcus erythropolis (strain PR4 / NBRC 100887).